Reading from the N-terminus, the 466-residue chain is Cysteine--tRNA ligase (466 aa).

C27 lines the Zn(2+) pocket. The 'HIGH' region signature appears at 29 to 39 (PTVYDLAHIGN). Zn(2+) is bound by residues C211, H236, and E240. A 'KMSKS' region motif is present at residues 270 to 274 (KMSKS). An ATP-binding site is contributed by K273.

Belongs to the class-I aminoacyl-tRNA synthetase family. Monomer. The cofactor is Zn(2+).

The protein resides in the cytoplasm. It carries out the reaction tRNA(Cys) + L-cysteine + ATP = L-cysteinyl-tRNA(Cys) + AMP + diphosphate. This Anaplasma marginale (strain St. Maries) protein is Cysteine--tRNA ligase.